The primary structure comprises 168 residues: Mediator of RNA polymerase II transcription subunit 31 (168 aa).

Residues 113-159 are compositionally biased toward acidic residues; the sequence is EGEDQDVEESEEETVENEQKESEDEEDVVIVEKPEDEQEEQAEEAAE. The interval 113 to 168 is disordered; that stretch reads EGEDQDVEESEEETVENEQKESEDEEDVVIVEKPEDEQEEQAEEAAEPTDTSLLNT.

It belongs to the Mediator complex subunit 31 family. As to quaternary structure, component of the Mediator complex.

It localises to the nucleus. In terms of biological role, component of the Mediator complex, a coactivator involved in the regulated transcription of nearly all RNA polymerase II-dependent genes. Mediator functions as a bridge to convey information from gene-specific regulatory proteins to the basal RNA polymerase II transcription machinery. Mediator is recruited to promoters by direct interactions with regulatory proteins and serves as a scaffold for the assembly of a functional preinitiation complex with RNA polymerase II and the general transcription factors. The chain is Mediator of RNA polymerase II transcription subunit 31 (mdt-31) from Caenorhabditis briggsae.